Consider the following 775-residue polypeptide: Beta-galactosidase 7 (775 aa).

A signal peptide spans 1-17 (MRGGMAITAALVVVAAA). Glu-185 serves as the catalytic Proton donor. Glu-256 serves as the catalytic Nucleophile. N-linked (GlcNAc...) asparagine glycans are attached at residues Asn-257, Asn-266, Asn-277, Asn-358, and Asn-602. The SUEL-type lectin domain maps to 689 to 775 (RGKVPKVRIW…KSLLVVADCR (87 aa)).

This sequence belongs to the glycosyl hydrolase 35 family.

The protein localises to the secreted. Its subcellular location is the extracellular space. The protein resides in the apoplast. The enzyme catalyses Hydrolysis of terminal non-reducing beta-D-galactose residues in beta-D-galactosides.. The chain is Beta-galactosidase 7 from Oryza sativa subsp. japonica (Rice).